The primary structure comprises 515 residues: Glucose-6-phosphate 1-dehydrogenase 6, cytoplasmic (515 aa).

NADP(+) contacts are provided by residues 38-45 (GASGDLAK), arginine 73, tyrosine 155, and lysine 182. D-glucose 6-phosphate contacts are provided by residues lysine 182, 212–216 (HYLGK), glutamate 250, and aspartate 269. Histidine 274 acts as the Proton acceptor in catalysis. Lysine 357 contacts NADP(+). D-glucose 6-phosphate is bound by residues lysine 360 and arginine 365. NADP(+) contacts are provided by lysine 366, arginine 370, and arginine 394. Glutamine 396 contributes to the D-glucose 6-phosphate binding site. NADP(+) is bound by residues 402-404 (YMK), 422-424 (DLS), arginine 488, and tryptophan 510.

The protein belongs to the glucose-6-phosphate dehydrogenase family. Forms homodimer. Expressed in roots, leaves, stems, buds, flowers and siliques.

The protein resides in the cytoplasm. It is found in the cytosol. The catalysed reaction is D-glucose 6-phosphate + NADP(+) = 6-phospho-D-glucono-1,5-lactone + NADPH + H(+). The protein operates within carbohydrate degradation; pentose phosphate pathway; D-ribulose 5-phosphate from D-glucose 6-phosphate (oxidative stage): step 1/3. Regulated by metabolites. Functionally, catalyzes the rate-limiting step of the oxidative pentose-phosphate pathway, which represents a route for the dissimilation of carbohydrates besides glycolysis. The main function of this enzyme is to provide reducing power (NADPH) and pentose phosphates for fatty acid and nucleic acid synthesis which are involved in membrane synthesis and cell division. This chain is Glucose-6-phosphate 1-dehydrogenase 6, cytoplasmic, found in Arabidopsis thaliana (Mouse-ear cress).